A 548-amino-acid chain; its full sequence is Glucose-6-phosphate isomerase (548 aa).

Catalysis depends on E355, which acts as the Proton donor. Residues H386 and K514 contribute to the active site.

Belongs to the GPI family.

Its subcellular location is the cytoplasm. The catalysed reaction is alpha-D-glucose 6-phosphate = beta-D-fructose 6-phosphate. Its pathway is carbohydrate biosynthesis; gluconeogenesis. It participates in carbohydrate degradation; glycolysis; D-glyceraldehyde 3-phosphate and glycerone phosphate from D-glucose: step 2/4. Its function is as follows. Catalyzes the reversible isomerization of glucose-6-phosphate to fructose-6-phosphate. The polypeptide is Glucose-6-phosphate isomerase (Proteus mirabilis (strain HI4320)).